Consider the following 265-residue polypeptide: Gamma-secretase subunit APH-1A (265 aa).

At Met-1 to Gly-2 the chain is on the lumenal side. A helical membrane pass occupies residues Ala-3 to Ile-23. The Cytoplasmic segment spans residues Thr-24–Arg-31. A helical membrane pass occupies residues Val-32–Val-52. The Lumenal segment spans residues Trp-53–Gln-68. Residues Tyr-69 to Ala-89 form a helical membrane-spanning segment. Topologically, residues Tyr-90 to Ala-118 are cytoplasmic. Residues Tyr-119–Ala-139 form a helical membrane-spanning segment. Residues Asp-140–Leu-158 are Lumenal-facing. Residues Thr-159 to Phe-179 traverse the membrane as a helical segment. Topologically, residues Asp-180–Arg-186 are cytoplasmic. Residues Tyr-187–Asn-207 traverse the membrane as a helical segment. Residues Pro-208–Ser-213 lie on the Lumenal side of the membrane. The chain crosses the membrane as a helical span at residues Leu-214 to Gly-234. At Ser-235–Asp-265 the chain is on the cytoplasmic side.

It belongs to the APH-1 family. The functional gamma-secretase complex is composed of at least four polypeptides: a presenilin homodimer (PSEN1 or PSEN2), nicastrin (NCSTN), APH1 (APH1A or APH1B) and PSENEN/PEN2.

The protein resides in the endoplasmic reticulum membrane. Its subcellular location is the golgi apparatus. It is found in the golgi stack membrane. Functionally, non-catalytic subunit of the gamma-secretase complex, an endoprotease complex that catalyzes the intramembrane cleavage of integral membrane proteins such as Notch receptors and APP (amyloid-beta precursor protein). Required for normal gamma-secretase assembly. The gamma-secretase complex plays a role in Notch and Wnt signaling cascades and regulation of downstream processes via its role in processing key regulatory proteins, and by regulating cytosolic CTNNB1 levels. The chain is Gamma-secretase subunit APH-1A (Aph1a) from Mus musculus (Mouse).